The following is a 235-amino-acid chain: Golgi to ER traffic protein 1 (235 aa).

A topological domain (lumenal) is located at residue M1. The helical transmembrane segment at 2–21 (HWAAAVAIFFIVVTKFLQYT) threads the bilayer. Residues 22–104 (NKYHEKWISK…AFQAHLHKLR (83 aa)) lie on the Cytoplasmic side of the membrane. Residues 68–104 (WTKNNRKLDSLDKEINNLKDEIQSENKAFQAHLHKLR) adopt a coiled-coil conformation. A helical membrane pass occupies residues 105–125 (LLALTVPFFVFKIMYGKTPVY). Over 126 to 181 (KLSSSTSTLFPTFVSGVWSQGWLYVLLHPLRTISQKWHIMEGKFGASKFDDMALQS) the chain is Lumenal. The chain crosses the membrane as a helical span at residues 182-198 (VSLGIWVWALMNVINGV). Residues 199 to 235 (EFIVKQLFLTPKMEAPASVETQEEKALDAVDDAIILD) are Cytoplasmic-facing.

This sequence belongs to the WRB/GET1 family. Component of the Golgi to ER traffic (GET) complex, which is composed of GET1, GET2 and GET3. Within the complex, GET1 and GET2 form a heterotetramer which is stabilized by phosphatidylinositol binding and which binds to the GET3 homodimer.

It is found in the endoplasmic reticulum membrane. The protein localises to the golgi apparatus membrane. Required for the post-translational delivery of tail-anchored (TA) proteins to the endoplasmic reticulum. Together with GET2, acts as a membrane receptor for soluble GET3, which recognizes and selectively binds the transmembrane domain of TA proteins in the cytosol. The GET complex cooperates with the HDEL receptor ERD2 to mediate the ATP-dependent retrieval of resident ER proteins that contain a C-terminal H-D-E-L retention signal from the Golgi to the ER. This is Golgi to ER traffic protein 1 from Saccharomyces cerevisiae (strain RM11-1a) (Baker's yeast).